A 791-amino-acid polypeptide reads, in one-letter code: Centrosomal protein of 89 kDa (791 aa).

The disordered stretch occupies residues 27-203; it reads APKPAVPRTP…HTQQKDVKHS (177 aa). Positions 30–45 are enriched in pro residues; it reads PAVPRTPPPRSPNPSP. Residue Ser50 is modified to Phosphoserine. The span at 50 to 62 shows a compositional bias: low complexity; the sequence is SALAAAILATTLT. A compositionally biased stretch (basic and acidic residues) spans 75–89; that stretch reads SRSESDASDIEKDSF. Over residues 94–107 the composition is skewed to polar residues; sequence ATTSELRLRQSWQN. The segment covering 137–161 has biased composition (basic and acidic residues); sequence RESESTWKDVGDGRDATYTVPHRDQ. Over residues 181 to 190 the composition is skewed to low complexity; sequence SDSSSSSSSS. 3 coiled-coil regions span residues 252–291, 370–598, and 670–737; these read SANQALSCELSALRQAMKDLQLKLKLVEKDNRKLKETEKA, LLAY…MGKE, and HRLK…SLLQ.

The protein resides in the cytoplasm. The protein localises to the cytosol. Its subcellular location is the cytoskeleton. It is found in the microtubule organizing center. It localises to the centrosome. The protein resides in the spindle pole. The protein localises to the centriole. Its subcellular location is the mitochondrion intermembrane space. Required for ciliogenesis. Also plays a role in mitochondrial metabolism where it may modulate complex IV activity. This is Centrosomal protein of 89 kDa (Cep89) from Mus musculus (Mouse).